A 659-amino-acid polypeptide reads, in one-letter code: Endoglucanase A (659 aa).

The catalytic stretch occupies residues 1–500 (MLIFETYLIL…SKLPNFPPKE (500 aa)). The active-site Nucleophile is the Asp-101. The segment at 413–433 (NSPKHPHHRTAHGSWSNQLTN) is disordered. Residues His-419, Asp-457, and Glu-466 contribute to the active site. One can recognise a CBM3 domain in the interval 501-658 (QVEDEFFVEA…GVLVFGTLPD (158 aa)).

It belongs to the glycosyl hydrolase 9 (cellulase E) family.

The protein localises to the secreted. The enzyme catalyses Endohydrolysis of (1-&gt;4)-beta-D-glucosidic linkages in cellulose, lichenin and cereal beta-D-glucans.. With respect to regulation, strongly inhibited by ZnCl(2) and by EDTA. Its function is as follows. Active on carboxymethyl cellulose and carboxymethyl cellulose-RBB but not avicel, xanthan gum, carboxymethyl-curdulan-RBB or carboxymethyl-xylan-RBB. This is Endoglucanase A (eglA) from Bacillus pumilus (Bacillus mesentericus).